A 267-amino-acid polypeptide reads, in one-letter code: Imidazole glycerol phosphate synthase subunit HisF (267 aa).

Catalysis depends on residues Asp21 and Asp140.

Belongs to the HisA/HisF family. Heterodimer of HisH and HisF.

Its subcellular location is the cytoplasm. The enzyme catalyses 5-[(5-phospho-1-deoxy-D-ribulos-1-ylimino)methylamino]-1-(5-phospho-beta-D-ribosyl)imidazole-4-carboxamide + L-glutamine = D-erythro-1-(imidazol-4-yl)glycerol 3-phosphate + 5-amino-1-(5-phospho-beta-D-ribosyl)imidazole-4-carboxamide + L-glutamate + H(+). It participates in amino-acid biosynthesis; L-histidine biosynthesis; L-histidine from 5-phospho-alpha-D-ribose 1-diphosphate: step 5/9. In terms of biological role, IGPS catalyzes the conversion of PRFAR and glutamine to IGP, AICAR and glutamate. The HisF subunit catalyzes the cyclization activity that produces IGP and AICAR from PRFAR using the ammonia provided by the HisH subunit. This is Imidazole glycerol phosphate synthase subunit HisF from Bordetella avium (strain 197N).